The sequence spans 239 residues: MESVVQPSVFVVDGQTDIPFRRLEQNHRRRRCGTVQVSLALVLLLGAGLATQGWFLLRLHQRLGDIVAHLPDGGKGSWEKLIQDQRSHQANPAAHLTGANASLIGIGGPLLWETRLGLAFLRGLTYHDGALVTMEPGYYYVYSKVQLSGVGCPQGLANGLPITHGLYKRTSRYPKELELLVSRRSPCGRANSSRVWWDSSFLGGVVHLEAGEEVVVRVPGNRLVRPRDGTRSYFGAFMV.

Topologically, residues 1 to 37 (MESVVQPSVFVVDGQTDIPFRRLEQNHRRRRCGTVQV) are cytoplasmic. The chain crosses the membrane as a helical; Signal-anchor for type II membrane protein span at residues 38-58 (SLALVLLLGAGLATQGWFLLR). The Extracellular portion of the chain corresponds to 59–239 (LHQRLGDIVA…TRSYFGAFMV (181 aa)). Residues 92–239 (PAAHLTGANA…TRSYFGAFMV (148 aa)) form the THD domain. N-linked (GlcNAc...) asparagine glycosylation occurs at asparagine 100. Cysteines 152 and 187 form a disulfide. Asparagine 191 is a glycosylation site (N-linked (GlcNAc...) asparagine).

It belongs to the tumor necrosis factor family. Homotrimer. Interacts with TNFRSF14. Post-translationally, the soluble form derives from the membrane form by proteolytic processing.

It localises to the cell membrane. The protein resides in the secreted. Cytokine that binds to TNFRSF3/LTBR. Binding to the decoy receptor TNFRSF6B modulates its effects. Activates NFKB and stimulates the proliferation of T-cells. Acts as a ligand for TNFRSF14/HVEM. Upon binding to TNFRSF14/HVEM, delivers costimulatory signals to T cells, leading to T cell proliferation and IFNG production. The sequence is that of Tumor necrosis factor ligand superfamily member 14 (Tnfsf14) from Mus musculus (Mouse).